A 187-amino-acid polypeptide reads, in one-letter code: Accessory gene regulator protein B (187 aa).

The next 5 membrane-spanning stretches (helical) occupy residues 49–69 (IAYI…FYLI), 82–102 (FWCY…VLHF), 107–127 (TLMM…APAA), 143–163 (YFSI…KEPY), and 164–184 (TQFI…IYYS).

This sequence belongs to the AgrB family.

The protein localises to the cell membrane. Functionally, essential for the production of a quorum sensing system signal molecule, the autoinducing peptide (AIP). This quorum sensing system is responsible for the regulation of the expression of virulence factor genes. Involved in the proteolytic processing of AgrD, the precursor of AIP. This Staphylococcus aureus (strain MW2) protein is Accessory gene regulator protein B.